Here is a 360-residue protein sequence, read N- to C-terminus: Alpha-2-macroglobulin receptor-associated protein (360 aa).

The signal sequence occupies residues 1-28 (MAPRRERVSTLPRLQLLVLLLLPLMLVP). Phosphoserine is present on residues Ser53 and Ser138. Residues 184 to 302 (EKIQEYNVLL…KHNHYQKQLE (119 aa)) are a coiled coil. The interval 240-356 (RLRKVSHQGY…DLSSRVSRAR (117 aa)) is LDL receptor binding. Asn271 carries N-linked (GlcNAc...) asparagine glycosylation. The short motif at 357–360 (HNEL) is the Prevents secretion from ER element.

Belongs to the alpha-2-MRAP family. In terms of assembly, interacts with the LRP1/alpha-2-macroglobulin receptor heavy and light chains; the interaction is transient and coincides with a reduction of ligand binding by the receptor. Interacts with LRP2/glycoprotein 330. Interacts with LRP1B; binding is followed by internalization and degradation. Interacts with LDLR. Interacts with SORL1. Interacts with LRP1; this interaction is followed by rapid internalization. Post-translationally, N-glycosylated. In terms of tissue distribution, highly expressed in PYS-2 parietal endoderm cells and in the kidney. The RNA level increased about 10-fold during differentiation of F9 embryonal carcinoma cells to parietal endoderm cells.

It is found in the rough endoplasmic reticulum lumen. The protein localises to the endoplasmic reticulum-Golgi intermediate compartment lumen. It localises to the golgi apparatus. The protein resides in the cis-Golgi network. Its subcellular location is the golgi apparatus lumen. It is found in the endosome lumen. The protein localises to the cell surface. Functionally, molecular chaperone for LDL receptor-related proteins that may regulate their ligand binding activity along the secretory pathway. The protein is Alpha-2-macroglobulin receptor-associated protein (Lrpap1) of Mus musculus (Mouse).